The chain runs to 89 residues: Putative regulatory protein RBAM_015500 (89 aa).

It belongs to the RemA family.

This is Putative regulatory protein RBAM_015500 from Bacillus velezensis (strain DSM 23117 / BGSC 10A6 / LMG 26770 / FZB42) (Bacillus amyloliquefaciens subsp. plantarum).